Here is a 146-residue protein sequence, read N- to C-terminus: 3-hydroxyacyl-[acyl-carrier-protein] dehydratase FabZ (146 aa).

H49 is an active-site residue.

Belongs to the thioester dehydratase family. FabZ subfamily.

The protein localises to the cytoplasm. The catalysed reaction is a (3R)-hydroxyacyl-[ACP] = a (2E)-enoyl-[ACP] + H2O. Functionally, involved in unsaturated fatty acids biosynthesis. Catalyzes the dehydration of short chain beta-hydroxyacyl-ACPs and long chain saturated and unsaturated beta-hydroxyacyl-ACPs. This Psychrobacter arcticus (strain DSM 17307 / VKM B-2377 / 273-4) protein is 3-hydroxyacyl-[acyl-carrier-protein] dehydratase FabZ.